A 237-amino-acid polypeptide reads, in one-letter code: Ribonuclease PH (237 aa).

Residues Arg-86 and Gly-124 to Arg-126 contribute to the phosphate site.

This sequence belongs to the RNase PH family. Homohexameric ring arranged as a trimer of dimers.

It catalyses the reaction tRNA(n+1) + phosphate = tRNA(n) + a ribonucleoside 5'-diphosphate. Its function is as follows. Phosphorolytic 3'-5' exoribonuclease that plays an important role in tRNA 3'-end maturation. Removes nucleotide residues following the 3'-CCA terminus of tRNAs; can also add nucleotides to the ends of RNA molecules by using nucleoside diphosphates as substrates, but this may not be physiologically important. Probably plays a role in initiation of 16S rRNA degradation (leading to ribosome degradation) during starvation. In Rhodopseudomonas palustris (strain ATCC BAA-98 / CGA009), this protein is Ribonuclease PH.